The chain runs to 298 residues: 4-hydroxy-tetrahydrodipicolinate synthase (298 aa).

A pyruvate-binding site is contributed by Thr48. The active-site Proton donor/acceptor is the Tyr137. Lys166 acts as the Schiff-base intermediate with substrate in catalysis. Ile207 contacts pyruvate.

This sequence belongs to the DapA family. Homotetramer; dimer of dimers.

It localises to the cytoplasm. It carries out the reaction L-aspartate 4-semialdehyde + pyruvate = (2S,4S)-4-hydroxy-2,3,4,5-tetrahydrodipicolinate + H2O + H(+). It functions in the pathway amino-acid biosynthesis; L-lysine biosynthesis via DAP pathway; (S)-tetrahydrodipicolinate from L-aspartate: step 3/4. Catalyzes the condensation of (S)-aspartate-beta-semialdehyde [(S)-ASA] and pyruvate to 4-hydroxy-tetrahydrodipicolinate (HTPA). The chain is 4-hydroxy-tetrahydrodipicolinate synthase from Campylobacter lari (strain RM2100 / D67 / ATCC BAA-1060).